Here is a 131-residue protein sequence, read N- to C-terminus: Glycine cleavage system H protein (131 aa).

The 83-residue stretch at 24-106 (RAIVGISDHA…YGEGWIMVIE (83 aa)) folds into the Lipoyl-binding domain. K65 carries the N6-lipoyllysine modification.

It belongs to the GcvH family. As to quaternary structure, the glycine cleavage system is composed of four proteins: P, T, L and H. The cofactor is (R)-lipoate.

Its function is as follows. The glycine cleavage system catalyzes the degradation of glycine. The H protein shuttles the methylamine group of glycine from the P protein to the T protein. In Xylella fastidiosa (strain M12), this protein is Glycine cleavage system H protein.